The following is a 727-amino-acid chain: Procollagen-lysine,2-oxoglutarate 5-dioxygenase 1 (727 aa).

The first 18 residues, methionine 1–alanine 18, serve as a signal peptide directing secretion. Residues asparagine 163, asparagine 197, and asparagine 538 are each glycosylated (N-linked (GlcNAc...) asparagine). Positions glutamine 636–proline 727 constitute a Fe2OG dioxygenase domain. Fe cation contacts are provided by histidine 656 and aspartate 658. The N-linked (GlcNAc...) asparagine glycan is linked to asparagine 686. Histidine 708 serves as a coordination point for Fe cation. The active site involves arginine 718.

In terms of assembly, homodimer. Identified in a complex with P3H3 and P3H4. Fe(2+) serves as cofactor. It depends on L-ascorbate as a cofactor.

It is found in the rough endoplasmic reticulum membrane. It catalyses the reaction L-lysyl-[collagen] + 2-oxoglutarate + O2 = (5R)-5-hydroxy-L-lysyl-[collagen] + succinate + CO2. Its function is as follows. Part of a complex composed of PLOD1, P3H3 and P3H4 that catalyzes hydroxylation of lysine residues in collagen alpha chains and is required for normal assembly and cross-linkling of collagen fibrils. Forms hydroxylysine residues in -Xaa-Lys-Gly- sequences in collagens. These hydroxylysines serve as sites of attachment for carbohydrate units and are essential for the stability of the intermolecular collagen cross-links. This is Procollagen-lysine,2-oxoglutarate 5-dioxygenase 1 (PLOD1) from Homo sapiens (Human).